The sequence spans 161 residues: Nucleotide-binding protein XCV3791 (161 aa).

It belongs to the YajQ family.

Its function is as follows. Nucleotide-binding protein. This chain is Nucleotide-binding protein XCV3791, found in Xanthomonas euvesicatoria pv. vesicatoria (strain 85-10) (Xanthomonas campestris pv. vesicatoria).